The chain runs to 629 residues: Phosphoglucomutase, chloroplastic (629 aa).

Residues 1 to 69 (MSSTYARFDT…SSSSGPIIAG (69 aa)) constitute a chloroplast transit peptide. Residues arginine 94 and serine 187 each contribute to the alpha-D-glucose 1,6-bisphosphate site. The active-site Phosphoserine intermediate is serine 187. Mg(2+)-binding residues include serine 187, aspartate 352, aspartate 354, and aspartate 356. Serine 187 is subject to Phosphoserine. Residues aspartate 356, arginine 357, threonine 420, glutamate 439, serine 441, and lysine 452 each coordinate alpha-D-glucose 1,6-bisphosphate.

Belongs to the phosphohexose mutase family. Monomer. The cofactor is Mg(2+).

It localises to the plastid. It is found in the chloroplast. It carries out the reaction alpha-D-glucose 1-phosphate = alpha-D-glucose 6-phosphate. The enzyme catalyses O-phospho-L-seryl-[protein] + alpha-D-glucose 1-phosphate = alpha-D-glucose 1,6-bisphosphate + L-seryl-[protein]. It catalyses the reaction alpha-D-glucose 1,6-bisphosphate + L-seryl-[protein] = O-phospho-L-seryl-[protein] + alpha-D-glucose 6-phosphate. Its activity is regulated as follows. Inhibited by the Calvin cycle intermediates fructose-1,6-bisphosphate and ribulose-1,5-bisphosphate. Its function is as follows. Catalyzes the reversible isomerization of alpha-D-glucose 1-phosphate to alpha-D-glucose 6-phosphate. The mechanism proceeds via the intermediate compound alpha-D-glucose 1,6-bisphosphate. This enzyme participates in both the breakdown and synthesis of glucose. This chain is Phosphoglucomutase, chloroplastic (PGMP), found in Brassica napus (Rape).